The chain runs to 88 residues: Small ribosomal subunit protein uS15 (88 aa).

It belongs to the universal ribosomal protein uS15 family. As to quaternary structure, part of the 30S ribosomal subunit. Forms a bridge to the 50S subunit in the 70S ribosome, contacting the 23S rRNA.

Functionally, one of the primary rRNA binding proteins, it binds directly to 16S rRNA where it helps nucleate assembly of the platform of the 30S subunit by binding and bridging several RNA helices of the 16S rRNA. In terms of biological role, forms an intersubunit bridge (bridge B4) with the 23S rRNA of the 50S subunit in the ribosome. In Polaromonas sp. (strain JS666 / ATCC BAA-500), this protein is Small ribosomal subunit protein uS15.